We begin with the raw amino-acid sequence, 337 residues long: Glyceraldehyde-3-phosphate dehydrogenase (337 aa).

NAD(+) is bound by residues 12–13 (RI), Asp34, and Arg79. D-glyceraldehyde 3-phosphate contacts are provided by residues 150 to 152 (SCT), Thr181, 210 to 211 (TG), and Arg233. Cys151 serves as the catalytic Nucleophile. Asn315 contributes to the NAD(+) binding site.

This sequence belongs to the glyceraldehyde-3-phosphate dehydrogenase family. In terms of assembly, homotetramer.

The protein resides in the cytoplasm. It carries out the reaction D-glyceraldehyde 3-phosphate + phosphate + NAD(+) = (2R)-3-phospho-glyceroyl phosphate + NADH + H(+). It functions in the pathway carbohydrate degradation; glycolysis; pyruvate from D-glyceraldehyde 3-phosphate: step 1/5. The protein is Glyceraldehyde-3-phosphate dehydrogenase (GPD) of Podospora anserina (Pleurage anserina).